Reading from the N-terminus, the 412-residue chain is Na(+)-translocating NADH-quinone reductase subunit B (412 aa).

The next 3 membrane-spanning stretches (helical) occupy residues Met57–Leu77, Val127–Phe147, and Ser163–Ile183. Thr236 carries the post-translational modification FMN phosphoryl threonine. The next 5 membrane-spanning stretches (helical) occupy residues Gly270 to Gly290, Ile297 to Ser317, Met322 to Phe342, Trp358 to Tyr378, and Gly381 to Val401.

Belongs to the NqrB/RnfD family. In terms of assembly, composed of six subunits; NqrA, NqrB, NqrC, NqrD, NqrE and NqrF. FMN serves as cofactor.

It is found in the cell inner membrane. The enzyme catalyses a ubiquinone + n Na(+)(in) + NADH + H(+) = a ubiquinol + n Na(+)(out) + NAD(+). Its function is as follows. NQR complex catalyzes the reduction of ubiquinone-1 to ubiquinol by two successive reactions, coupled with the transport of Na(+) ions from the cytoplasm to the periplasm. NqrA to NqrE are probably involved in the second step, the conversion of ubisemiquinone to ubiquinol. The protein is Na(+)-translocating NADH-quinone reductase subunit B of Klebsiella pneumoniae subsp. pneumoniae (strain ATCC 700721 / MGH 78578).